Consider the following 252-residue polypeptide: Imidazole glycerol phosphate synthase subunit HisF (252 aa).

Active-site residues include aspartate 11 and aspartate 130.

This sequence belongs to the HisA/HisF family. As to quaternary structure, heterodimer of HisH and HisF.

Its subcellular location is the cytoplasm. It catalyses the reaction 5-[(5-phospho-1-deoxy-D-ribulos-1-ylimino)methylamino]-1-(5-phospho-beta-D-ribosyl)imidazole-4-carboxamide + L-glutamine = D-erythro-1-(imidazol-4-yl)glycerol 3-phosphate + 5-amino-1-(5-phospho-beta-D-ribosyl)imidazole-4-carboxamide + L-glutamate + H(+). It functions in the pathway amino-acid biosynthesis; L-histidine biosynthesis; L-histidine from 5-phospho-alpha-D-ribose 1-diphosphate: step 5/9. In terms of biological role, IGPS catalyzes the conversion of PRFAR and glutamine to IGP, AICAR and glutamate. The HisF subunit catalyzes the cyclization activity that produces IGP and AICAR from PRFAR using the ammonia provided by the HisH subunit. In Thermococcus kodakarensis (strain ATCC BAA-918 / JCM 12380 / KOD1) (Pyrococcus kodakaraensis (strain KOD1)), this protein is Imidazole glycerol phosphate synthase subunit HisF.